Here is a 489-residue protein sequence, read N- to C-terminus: Ribulose-1,5 bisphosphate carboxylase/oxygenase large subunit N-methyltransferase, chloroplastic (489 aa).

The N-terminal 37 residues, 1–37 (MATIFSGGSVSPFLFHTNKGTSFTPKAPILHLKRSFS), are a transit peptide targeting the chloroplast. An SET domain is found at 64 to 288 (EGVITAKTPV…AGEQVYIQYD (225 aa)). S-adenosyl-L-methionine is bound by residues 80–82 (EGL) and R222. Residues R222, R226, and D239 each coordinate substrate. S-adenosyl-L-methionine is bound at residue 242–243 (NH). Positions 254, 287, and 300 each coordinate substrate.

The protein belongs to the class V-like SAM-binding methyltransferase superfamily. Plant protein-lysine LSMT methyltransferase family. In terms of assembly, homotrimer. In terms of tissue distribution, highly expressed in leaf.

It is found in the plastid. It localises to the chloroplast. The enzyme catalyses L-lysyl-[ribulose-1,5-bisphosphate carboxylase] + 3 S-adenosyl-L-methionine = N(6),N(6),N(6)-trimethyl-L-lysyl-[ribulose-1,5-bisphosphate carboxylase] + 3 S-adenosyl-L-homocysteine + 3 H(+). It carries out the reaction [fructose-bisphosphate aldolase]-L-lysine + 3 S-adenosyl-L-methionine = [fructose-bisphosphate aldolase]-N(6),N(6),N(6)-trimethyl-L-lysine + 3 S-adenosyl-L-homocysteine + 3 H(+). Its function is as follows. Methylates 'Lys-14' of the large subunit of RuBisCO. Can also use with lower efficiency chloroplastic fructose-bisphosphate aldolases and gamma-tocopherol methyltransferase as substrates, but not a cytosolic aldolase. In Pisum sativum (Garden pea), this protein is Ribulose-1,5 bisphosphate carboxylase/oxygenase large subunit N-methyltransferase, chloroplastic (RBCMT).